Here is a 215-residue protein sequence, read N- to C-terminus: Small ribosomal subunit protein uS3 (215 aa).

Positions 38-107 constitute a KH type-2 domain; the sequence is IRDYIKKTYH…KFQLNIEEVK (70 aa).

This sequence belongs to the universal ribosomal protein uS3 family. As to quaternary structure, part of the 30S ribosomal subunit. Forms a tight complex with proteins S10 and S14.

Its function is as follows. Binds the lower part of the 30S subunit head. Binds mRNA in the 70S ribosome, positioning it for translation. The chain is Small ribosomal subunit protein uS3 from Kosmotoga olearia (strain ATCC BAA-1733 / DSM 21960 / TBF 19.5.1).